A 240-amino-acid chain; its full sequence is uncharacterized protein (240 aa).

A helical membrane pass occupies residues 73-93 (LLGCLYFFIYFVAPTLGPVLF).

This sequence belongs to the universal ribosomal protein uS3 family.

It localises to the mitochondrion membrane. This is an uncharacterized protein from Arabidopsis thaliana (Mouse-ear cress).